A 422-amino-acid polypeptide reads, in one-letter code: 5'-deoxyadenosine deaminase (422 aa).

Zn(2+) contacts are provided by His-57 and His-59. Substrate contacts are provided by Glu-86 and His-178. His-205 is a Zn(2+) binding site. Residues Glu-208 and Asp-294 each coordinate substrate. Asp-294 serves as a coordination point for Zn(2+).

The protein belongs to the metallo-dependent hydrolases superfamily. MTA/SAH deaminase family. As to quaternary structure, homotetramer. Zn(2+) serves as cofactor.

The catalysed reaction is 5'-deoxyadenosine + H2O + H(+) = 5'-deoxyinosine + NH4(+). The enzyme catalyses S-adenosyl-L-homocysteine + H2O + H(+) = S-inosyl-L-homocysteine + NH4(+). It carries out the reaction S-methyl-5'-thioadenosine + H2O + H(+) = S-methyl-5'-thioinosine + NH4(+). It catalyses the reaction adenosine + H2O + H(+) = inosine + NH4(+). Its pathway is amino-acid biosynthesis; S-adenosyl-L-methionine biosynthesis. Its function is as follows. Catalyzes the deamination of three SAM-derived enzymatic products, namely 5'-deoxyadenosine, S-adenosyl-L-homocysteine, and 5'-methylthioadenosine, to produce the inosine analogs. Can also deaminate adenosine. The preferred substrate for this enzyme is 5'-deoxyadenosine, but all these substrates are efficiently deaminated. Likely functions in a S-adenosyl-L-methionine (SAM) recycling pathway from S-adenosyl-L-homocysteine (SAH) produced from SAM-dependent methylation reactions. May also be involved in the recycling of 5'-deoxyadenosine, whereupon the 5'-deoxyribose moiety of 5'-deoxyinosine is further metabolized to deoxyhexoses used for the biosynthesis of aromatic amino acids in methanogens. In Methanococcus maripaludis (strain C7 / ATCC BAA-1331), this protein is 5'-deoxyadenosine deaminase.